Reading from the N-terminus, the 255-residue chain is MAWPGPLLLKDRKGRAYLVFPKEGGVFHHHKGSVPHEALLEAGPGGVVRTHLGEELSVHRPTLEEYLLHMKRSATPTYPKDASAMVTLLDLAPGMRVLEAGTGSGGLTLFLARAVGEKGLVESYEARPHHLAQAERNVRAFWQVENVRFHLGKLEEAELEEAAYDGVALDLMEPWKALEKAALALKPDRFLVAYLPNITQVLELVRAAEAHPFRLERVLEVGWREWEVRLPVAHPRFQQVGHTAFLVALRRWKAS.

S-adenosyl-L-methionine-binding positions include 104–107 (SGGL), Glu125, His130, Glu155, and Asp170.

This sequence belongs to the class I-like SAM-binding methyltransferase superfamily. TRM61 family. As to quaternary structure, homotetramer composed of a dimer of dimers.

The catalysed reaction is adenosine(58) in tRNA + S-adenosyl-L-methionine = N(1)-methyladenosine(58) in tRNA + S-adenosyl-L-homocysteine + H(+). Catalyzes the S-adenosyl-L-methionine-dependent formation of N(1)-methyladenine at position 58 (m1A58) in tRNA. This Thermus thermophilus (strain ATCC 27634 / DSM 579 / HB8) protein is tRNA (adenine(58)-N(1))-methyltransferase TrmI (trmI).